A 130-amino-acid chain; its full sequence is Phosphoribosyl-AMP cyclohydrolase (130 aa).

Position 77 (D77) interacts with Mg(2+). C78 provides a ligand contact to Zn(2+). 2 residues coordinate Mg(2+): D79 and D81. Zn(2+)-binding residues include C95 and C102.

It belongs to the PRA-CH family. In terms of assembly, homodimer. The cofactor is Mg(2+). Requires Zn(2+) as cofactor.

Its subcellular location is the cytoplasm. The catalysed reaction is 1-(5-phospho-beta-D-ribosyl)-5'-AMP + H2O = 1-(5-phospho-beta-D-ribosyl)-5-[(5-phospho-beta-D-ribosylamino)methylideneamino]imidazole-4-carboxamide. It participates in amino-acid biosynthesis; L-histidine biosynthesis; L-histidine from 5-phospho-alpha-D-ribose 1-diphosphate: step 3/9. Catalyzes the hydrolysis of the adenine ring of phosphoribosyl-AMP. This chain is Phosphoribosyl-AMP cyclohydrolase, found in Pseudomonas entomophila (strain L48).